The chain runs to 447 residues: MIKIYDTMTRSLRKFVPLTENTVNMYVCGPTVYNYIHIGNARSAVAFDTIRRYFEYTGYQVNYISNFTDIDDKIIKAATQAGVSPKELSDRFIAAFIEDTKALGVKPATQNPRVMDYIAEIISFVESLIEKDFAYEADGDVYFRVEKSEHYAKLANKTLSELEVGASGRTDAETALKENPLDFALWKSAKAGEVSWDSPWGFGRPGWHIECSVMATEILGDTIDIHGGGADLEFPHHTNEIAQSEAKTGKTFANYWMHNGFVTVDNEKMSKSLGNFVTVHDMLQTVDGQVLRFFLATQQYRKPINFTEKAIHDAEINLKYLKNTLQQPLTETADEQELKQFVIAFQDAMDDDFNTANGITVVFDMAKWINSGSYTEPVKSAFEKMLAVFGIIFEEEVLEVDIEALIAKRQEARANRDFATADAIRDQLAAQGIKLLDTKDGVRWLRD.

C28 is a Zn(2+) binding site. Positions 30–40 (PTVYNYIHIGN) match the 'HIGH' region motif. Residues C211, H236, and E240 each coordinate Zn(2+). A 'KMSKS' region motif is present at residues 268 to 272 (KMSKS). K271 provides a ligand contact to ATP.

It belongs to the class-I aminoacyl-tRNA synthetase family. As to quaternary structure, monomer. Requires Zn(2+) as cofactor.

Its subcellular location is the cytoplasm. It catalyses the reaction tRNA(Cys) + L-cysteine + ATP = L-cysteinyl-tRNA(Cys) + AMP + diphosphate. The protein is Cysteine--tRNA ligase of Streptococcus pyogenes serotype M3 (strain ATCC BAA-595 / MGAS315).